A 251-amino-acid chain; its full sequence is NADPH-dependent oxidoreductase (251 aa).

Belongs to the flavin oxidoreductase frp family. Requires FMN as cofactor.

In terms of biological role, reduces FMN, organic nitro compounds and disulfide DTNB. Involved in maintenance of the cellular redox state and the disulfide stress response. This chain is NADPH-dependent oxidoreductase (nfrA), found in Staphylococcus aureus (strain MSSA476).